Reading from the N-terminus, the 113-residue chain is Nucleoid-associated protein PMT_0025 (113 aa).

Belongs to the YbaB/EbfC family. In terms of assembly, homodimer.

Its subcellular location is the cytoplasm. It localises to the nucleoid. Binds to DNA and alters its conformation. May be involved in regulation of gene expression, nucleoid organization and DNA protection. The polypeptide is Nucleoid-associated protein PMT_0025 (Prochlorococcus marinus (strain MIT 9313)).